The primary structure comprises 710 residues: Amyloid beta precursor protein binding family B member 1 (710 aa).

A compositionally biased stretch (polar residues) spans 1–15; the sequence is MSVPSSLSQSAINAN. Disordered stretches follow at residues 1–24, 131–254, 276–299, and 340–365; these read MSVP…ALSL, GLRG…TDSD, GTTQ…EESQ, and TFPA…NTNP. The segment covering 145 to 173 has biased composition (acidic residues); the sequence is GPDEGEEKAAGEAEEEEEDDDDEEEEEDL. Lysine 204 bears the N6-acetyllysine mark. Over residues 223-234 the composition is skewed to polar residues; that stretch reads SWATLSQGSPSY. One can recognise a WW domain in the interval 253-285; the sequence is SDLPAGWMRVQDTSGTYYWHIPTGTTQWEPPGR. Low complexity predominate over residues 287-299; it reads SPSQGSSPQEESQ. The region spanning 370–509 is the PID 1 domain; that stretch reads FAVRSLGWVE…SKIMAERRNA (140 aa). Serine 459 bears the Phosphoserine; by PKC mark. At serine 517 the chain carries Phosphoserine. The 158-residue stretch at 542 to 699 folds into the PID 2 domain; that stretch reads KFQVYYLGNV…RRGVQSLWGS (158 aa). Tyrosine 547 carries the post-translational modification Phosphotyrosine; by ABL1. A Phosphoserine; by SGK1 modification is found at serine 610. At lysine 701 the chain carries N6-acetyllysine.

In terms of assembly, component of a complex, at least composed of APBB1, RASD1/DEXRAS1 and APP. Interacts (via PID domain 2) with APP (with the intracellular domain of the amyloid-beta precursor protein). Interacts (via PID domain 2) with RASD1/DEXRAS1; impairs the transcription activation activity. Interacts (via PID domain 1) with KAT5/TIP60. Interacts (via the WW domain) with the proline-rich region of APBB1IP. Interacts with TSHZ1 and TSHZ2. Interacts (via the WW domain) with histone H2AX (when phosphorylated on 'Tyr-142') and the proline-rich region of ENAH. Interacts with MAPK8. Interacts (via PID domain 1) with TSHZ3 (via homeobox domain). Interacts with SET. Found in a trimeric complex with HDAC1 and TSHZ3; the interaction between HDAC1 and APBB1 is mediated by TSHZ3. Interacts (via WWW domain) with NEK6. Interacts (via WWW domain) with ABL1. Interacts with RNF157. Interacts with ARF6. Post-translationally, phosphorylation at Ser-610 by SGK1 promotes its localization to the nucleus. Phosphorylated following nuclear translocation. Phosphorylation at Tyr-547 by ABL1 enhances transcriptional activation activity and reduces the affinity for RASD1/DEXRAS1. Phosphorylated at Ser-459 by PKC upon insulin activation. In terms of processing, acetylation at Lys-204 and Lys-701 by KAT5 promotes its transcription activator activity. Polyubiquitination by RNF157 leads to degradation by the proteasome. In terms of tissue distribution, highly expressed in brain; strongly reduced in post-mortem elderly subjects with Alzheimer disease. As to expression, expressed preferentially in the brain.

The protein localises to the cell membrane. Its subcellular location is the cytoplasm. The protein resides in the nucleus. It is found in the cell projection. It localises to the growth cone. The protein localises to the nucleus speckle. In terms of biological role, transcription coregulator that can have both coactivator and corepressor functions. Adapter protein that forms a transcriptionally active complex with the gamma-secretase-derived amyloid precursor protein (APP) intracellular domain. Plays a central role in the response to DNA damage by translocating to the nucleus and inducing apoptosis. May act by specifically recognizing and binding histone H2AX phosphorylated on 'Tyr-142' (H2AXY142ph) at double-strand breaks (DSBs), recruiting other pro-apoptosis factors such as MAPK8/JNK1. Required for histone H4 acetylation at double-strand breaks (DSBs). Its ability to specifically bind modified histones and chromatin modifying enzymes such as KAT5/TIP60, probably explains its transcription activation activity. Functions in association with TSHZ3, SET and HDAC factors as a transcriptional repressor, that inhibits the expression of CASP4. Associates with chromatin in a region surrounding the CASP4 transcriptional start site(s). Involved in hippocampal neurite branching and neuromuscular junction formation, as a result plays a role in spatial memory functioning. Plays a role in the maintenance of lens transparency. May play a role in muscle cell strength. Acts as a molecular adapter that functions in neurite outgrowth by activating the RAC1-ARF6 axis upon insulin treatment. This is Amyloid beta precursor protein binding family B member 1 from Homo sapiens (Human).